The chain runs to 531 residues: Phosphomethylpyrimidine synthase (531 aa).

Substrate contacts are provided by residues Asn-167, Met-196, Tyr-225, His-261, 281–283 (SRG), 322–325 (DALR), and Glu-361. A Zn(2+)-binding site is contributed by His-365. Tyr-388 contributes to the substrate binding site. His-429 serves as a coordination point for Zn(2+). [4Fe-4S] cluster contacts are provided by Cys-511, Cys-514, and Cys-519.

Belongs to the ThiC family. It depends on [4Fe-4S] cluster as a cofactor.

The catalysed reaction is 5-amino-1-(5-phospho-beta-D-ribosyl)imidazole + S-adenosyl-L-methionine = 4-amino-2-methyl-5-(phosphooxymethyl)pyrimidine + CO + 5'-deoxyadenosine + formate + L-methionine + 3 H(+). The protein operates within cofactor biosynthesis; thiamine diphosphate biosynthesis. In terms of biological role, catalyzes the synthesis of the hydroxymethylpyrimidine phosphate (HMP-P) moiety of thiamine from aminoimidazole ribotide (AIR) in a radical S-adenosyl-L-methionine (SAM)-dependent reaction. The protein is Phosphomethylpyrimidine synthase of Chlorobium chlorochromatii (strain CaD3).